A 166-amino-acid polypeptide reads, in one-letter code: UPF0304 protein VIBHAR_01542 (166 aa).

It belongs to the UPF0304 family.

This Vibrio campbellii (strain ATCC BAA-1116) protein is UPF0304 protein VIBHAR_01542.